The following is a 426-amino-acid chain: Enolase (426 aa).

Glutamine 163 provides a ligand contact to (2R)-2-phosphoglycerate. Catalysis depends on glutamate 205, which acts as the Proton donor. Residues aspartate 242, glutamate 286, and aspartate 313 each coordinate Mg(2+). Positions 338, 367, 368, and 389 each coordinate (2R)-2-phosphoglycerate. Lysine 338 serves as the catalytic Proton acceptor.

This sequence belongs to the enolase family. It depends on Mg(2+) as a cofactor.

The protein localises to the cytoplasm. It is found in the secreted. The protein resides in the cell surface. The catalysed reaction is (2R)-2-phosphoglycerate = phosphoenolpyruvate + H2O. It participates in carbohydrate degradation; glycolysis; pyruvate from D-glyceraldehyde 3-phosphate: step 4/5. Catalyzes the reversible conversion of 2-phosphoglycerate (2-PG) into phosphoenolpyruvate (PEP). It is essential for the degradation of carbohydrates via glycolysis. In Helicobacter pylori (strain J99 / ATCC 700824) (Campylobacter pylori J99), this protein is Enolase.